The following is a 146-amino-acid chain: D-aminoacyl-tRNA deacylase (146 aa).

The Gly-cisPro motif, important for rejection of L-amino acids motif lies at 137 to 138; the sequence is GP.

Belongs to the DTD family. In terms of assembly, homodimer.

The protein localises to the cytoplasm. The catalysed reaction is glycyl-tRNA(Ala) + H2O = tRNA(Ala) + glycine + H(+). The enzyme catalyses a D-aminoacyl-tRNA + H2O = a tRNA + a D-alpha-amino acid + H(+). In terms of biological role, an aminoacyl-tRNA editing enzyme that deacylates mischarged D-aminoacyl-tRNAs. Also deacylates mischarged glycyl-tRNA(Ala), protecting cells against glycine mischarging by AlaRS. Acts via tRNA-based rather than protein-based catalysis; rejects L-amino acids rather than detecting D-amino acids in the active site. By recycling D-aminoacyl-tRNA to D-amino acids and free tRNA molecules, this enzyme counteracts the toxicity associated with the formation of D-aminoacyl-tRNA entities in vivo and helps enforce protein L-homochirality. This is D-aminoacyl-tRNA deacylase from Psychrobacter sp. (strain PRwf-1).